Reading from the N-terminus, the 552-residue chain is FERRY endosomal RAB5 effector complex subunit 3 (552 aa).

A disordered region spans residues 383-403 (LKESLDSGNQNGGNDDKTKNA).

Component of the FERRY complex composed of five subunits, TBCK, PPP1R21, FERRY3, CRYZL1 and GATD1 with a ratio of 1:2:1:2:4, respectively.

The protein localises to the cytoplasm. The protein resides in the early endosome. Its function is as follows. Component of the FERRY complex (Five-subunit Endosomal Rab5 and RNA/ribosome intermediary). The FERRY complex directly interacts with mRNAs and RAB5A, and functions as a RAB5A effector involved in the localization and the distribution of specific mRNAs most likely by mediating their endosomal transport. The complex recruits mRNAs and ribosomes to early endosomes through direct mRNA-interaction. Plays a role in mast cell degranulation. This chain is FERRY endosomal RAB5 effector complex subunit 3, found in Pongo abelii (Sumatran orangutan).